Here is a 65-residue protein sequence, read N- to C-terminus: Large ribosomal subunit protein uL29 (65 aa).

Belongs to the universal ribosomal protein uL29 family.

The sequence is that of Large ribosomal subunit protein uL29 from Desulforamulus reducens (strain ATCC BAA-1160 / DSM 100696 / MI-1) (Desulfotomaculum reducens).